A 311-amino-acid polypeptide reads, in one-letter code: Porphobilinogen deaminase (311 aa).

An S-(dipyrrolylmethanemethyl)cysteine modification is found at cysteine 242.

It belongs to the HMBS family. In terms of assembly, monomer. Dipyrromethane is required as a cofactor.

It catalyses the reaction 4 porphobilinogen + H2O = hydroxymethylbilane + 4 NH4(+). It participates in porphyrin-containing compound metabolism; protoporphyrin-IX biosynthesis; coproporphyrinogen-III from 5-aminolevulinate: step 2/4. Functionally, tetrapolymerization of the monopyrrole PBG into the hydroxymethylbilane pre-uroporphyrinogen in several discrete steps. This chain is Porphobilinogen deaminase (hemC), found in Neisseria meningitidis serogroup A / serotype 4A (strain DSM 15465 / Z2491).